Here is an 843-residue protein sequence, read N- to C-terminus: Potassium transporter 10 (843 aa).

Positions 1 to 15 (MKSPSPVDPESPSSP) are enriched in low complexity. A disordered region spans residues 1–25 (MKSPSPVDPESPSSPDCKGGSSSKR). The Cytoplasmic segment spans residues 1-34 (MKSPSPVDPESPSSPDCKGGSSSKRRRLPWRMTM). Residues 35-55 (SLAYQSLGVVYGDLSTSPLYV) traverse the membrane as a helical segment. The Vacuolar portion of the chain corresponds to 56-72 (YKAAFAEDIQHSETNEE). A helical membrane pass occupies residues 73–93 (ILGVLSFVFWTLTLVPLLKYV). Residues 94–183 (CVVLRADDNG…LLERHKVLQR (90 aa)) are Cytoplasmic-facing. Residues 184-204 (VLLVLALVGTCMVIGDGVLTP) traverse the membrane as a helical segment. Residues 205–225 (AISVFSAVSGLELSMEKHQHK) lie on the Vacuolar side of the membrane. The chain crosses the membrane as a helical span at residues 226-246 (YVEVPIACFVLVCLFCLQHYG). At 247–249 (THR) the chain is on the cytoplasmic side. A helical transmembrane segment spans residues 250-270 (VGFLFAPIVITWLLCISMIGV). The Vacuolar segment spans residues 271–298 (YNIVHWEPNVYRALSPYYMYKFLKKTQR). A helical transmembrane segment spans residues 299-319 (GGWMSLGGILLCITGSEAMFA). The Cytoplasmic portion of the chain corresponds to 320–326 (DLGHFNQ). Residues 327–347 (LSIQIAFTCMVYPSLILAYMG) form a helical membrane-spanning segment. The Vacuolar segment spans residues 348–377 (QAAYLCKHHIIESDYRIGFYVSVPEKIRWP). The helical transmembrane segment at 378-398 (VLAIAILAAVVGSQAVITGTF) threads the bilayer. Residues 399-425 (SMIKQCTALGCFPRVKIVHTSDKVHGQ) lie on the Cytoplasmic side of the membrane. Residues 426–446 (IYIPEINWILMILCLAITIGF) form a helical membrane-spanning segment. At 447–451 (RDTKH) the chain is on the vacuolar side. Residues 452–472 (LGNASGLAVITVMLVTTCLMS) form a helical membrane-spanning segment. Residues 473–482 (LVIVLCWHKS) are Cytoplasmic-facing. Residues 483 to 505 (IFLAFGFIIFFGTIEALYFSASL) traverse the membrane as a helical segment. Over 506 to 510 (IKFRE) the chain is Vacuolar. The chain crosses the membrane as a helical span at residues 511–531 (GAWVPIVLAFIFMAIMCIWHY). At 532-843 (GTIKKYEFDL…TLEVGMIYYV (312 aa)) the chain is on the cytoplasmic side. The disordered stretch occupies residues 667-747 (AASSKPKNVC…IMSPSPSPPP (81 aa)). Over residues 718 to 735 (GGSGSGSGRGSSRGGGGA) the composition is skewed to gly residues.

Belongs to the HAK/KUP transporter (TC 2.A.72.3) family. Expressed in roots, shoots, and panicle at flowering stage.

The protein localises to the vacuole membrane. Functionally, high-affinity potassium transporter. The protein is Potassium transporter 10 (HAK10) of Oryza sativa subsp. japonica (Rice).